Here is a 630-residue protein sequence, read N- to C-terminus: Putative F-box/LRR-repeat protein At3g49150 (630 aa).

The F-box domain maps to 15 to 63 (KDIISDLPEALICHILSFLPIEDSALTSVLSKKWQHLFAFRPNLEFDDA). LRR repeat units lie at residues 101–129 (CRDF…DLRC), 152–178 (RIET…YLNK), 180–205 (LLRH…FIMN), 228–253 (CEDV…VYHD), 300–325 (ISNV…QIPV), 337–362 (DQKA…IFDG), 406–436 (CDDY…KLFY), 437–465 (DTQI…FNAR), and 567–590 (DSSI…GLNW).

The sequence is that of Putative F-box/LRR-repeat protein At3g49150 from Arabidopsis thaliana (Mouse-ear cress).